A 118-amino-acid chain; its full sequence is MERLKNHREFVAVLKRRRRVSDADIVLHYVVRTPSTPTGAAPARRLGLAVSKSVGNAVVRNTVKRRFRVLAHRYEHELPADCDIVLRAKPGAAHASFQSLEAQIQALFRAVMRKSEQS.

Belongs to the RnpA family. Consists of a catalytic RNA component (M1 or rnpB) and a protein subunit.

It carries out the reaction Endonucleolytic cleavage of RNA, removing 5'-extranucleotides from tRNA precursor.. Functionally, RNaseP catalyzes the removal of the 5'-leader sequence from pre-tRNA to produce the mature 5'-terminus. It can also cleave other RNA substrates such as 4.5S RNA. The protein component plays an auxiliary but essential role in vivo by binding to the 5'-leader sequence and broadening the substrate specificity of the ribozyme. This is Ribonuclease P protein component from Bifidobacterium animalis subsp. lactis (strain AD011).